A 732-amino-acid chain; its full sequence is MAP7 domain-containing protein 2 (732 aa).

Residue Met1 is modified to N-acetylmethionine. The span at 1-10 (MERGGGGSGT) shows a compositional bias: gly residues. Disordered regions lie at residues 1–64 (MERG…RREE), 95–123 (WRKL…LREE), 157–186 (PGGH…KRLS), 210–244 (GPLN…GKEA), and 279–509 (EFSG…KQKE). Basic and acidic residues predominate over residues 49–64 (LKSDERQRLAKERREE). A coiled-coil region spans residues 51–146 (SDERQRLAKE…RTQQLELKKK (96 aa)). Over residues 329–345 (MPKRKAEKEKSNKEREG) the composition is skewed to basic and acidic residues. Positions 347-357 (LAQQAAGPQGE) are enriched in low complexity. The span at 359 to 374 (ALEKHVVDKHASEKHA) shows a compositional bias: basic and acidic residues. Residues 375–386 (AAAGGKAENSAA) are compositionally biased toward low complexity. The segment covering 404-509 (LAEKRRQARL…EKAMIEKQKE (106 aa)) has biased composition (basic and acidic residues).

This sequence belongs to the MAP7 family. Interacts (via N-terminus) with microtubules; facilitates microtubule stabilization. Interacts with kinesin-1 family members, KIF5A, KIF5B and KIF5C.

It localises to the cytoplasm. Its subcellular location is the cytoskeleton. The protein resides in the microtubule organizing center. The protein localises to the centrosome. It is found in the midbody. It localises to the cell projection. Its subcellular location is the neuron projection. The protein resides in the axon. In terms of biological role, microtubule-stabilizing protein that plays a role in the control of cell motility and neurite outgrowth via direct binding to the microtubule. Acts as a critical cofactor for kinesin transport. In the proximal axon, regulates kinesin-1 family members, KIF5A, KIF5B and KIF5C recruitment to microtubules and contributes to kinesin-1-mediated transport in the axons. The chain is MAP7 domain-containing protein 2 (MAP7D2) from Homo sapiens (Human).